Consider the following 430-residue polypeptide: Divergent protein kinase domain 2A (430 aa).

Positions Met-1–Leu-35 are cleaved as a signal peptide.

The protein belongs to the DIPK family.

Its subcellular location is the cytoplasmic vesicle. The protein resides in the COPI-coated vesicle. It localises to the golgi apparatus. It is found in the secreted. Functionally, may play a role in cardiomyocyte proliferation through paracrine signaling and activation of the PPI3K-AKT-CDK7 signaling cascade. The polypeptide is Divergent protein kinase domain 2A (Homo sapiens (Human)).